Consider the following 467-residue polypeptide: MAFINEHFMLNNETGKHLYHDFAKDMPIYDYHCHLDPKQISDNVACDNITDLWLSGDHYKWRAMRAQGIEEQYITGDAAPLDKFKKWTETLENSVGNPLYHWSQLELKMYFDIEDLLTSDNAEAIYHRANDYLKQHHTTTQSLITDSNVNLICTTDNPTDDLNYHDAIKAKDGFNTTVLPAFRPDDVFKVGDPAFTDLLQKLENLTHPITTPSDFIEALYKRIQYFHDKGGRLADHGLEEMHFEAYTDQAIQDIFKKALNHADISTYERFQFQSYMLNELSKAYYERGWVMQIHFGAIRNNNTKMFEKVGKDAGFDSIRDQDNLAYHLNATLDMMEQEGHLPKTILYNLNPIYNDIVGSTIANFQTEPGIKSKVQHGAGWWFNDTKRGMLRQMSSLADQGLLMHFVGMLTDSRSFISYSRHDYFRRILSSFIGDLVEKGEIPNDDQLLKRMIENICYNNAYNYFKLI.

The protein belongs to the metallo-dependent hydrolases superfamily. Uronate isomerase family.

It catalyses the reaction D-glucuronate = D-fructuronate. The catalysed reaction is aldehydo-D-galacturonate = keto-D-tagaturonate. The protein operates within carbohydrate metabolism; pentose and glucuronate interconversion. This Staphylococcus haemolyticus (strain JCSC1435) protein is Uronate isomerase.